A 510-amino-acid polypeptide reads, in one-letter code: Lysine--tRNA ligase (510 aa).

Mg(2+) is bound by residues glutamate 420 and glutamate 427.

It belongs to the class-II aminoacyl-tRNA synthetase family. In terms of assembly, homodimer. Mg(2+) serves as cofactor.

Its subcellular location is the cytoplasm. The enzyme catalyses tRNA(Lys) + L-lysine + ATP = L-lysyl-tRNA(Lys) + AMP + diphosphate. In Ralstonia nicotianae (strain ATCC BAA-1114 / GMI1000) (Ralstonia solanacearum), this protein is Lysine--tRNA ligase.